A 275-amino-acid polypeptide reads, in one-letter code: NH(3)-dependent NAD(+) synthetase (275 aa).

46–53 provides a ligand contact to ATP; that stretch reads GISGGQDS. Asp-52 lines the Mg(2+) pocket. Residue Arg-140 participates in deamido-NAD(+) binding. Thr-160 contacts ATP. Glu-165 lines the Mg(2+) pocket. The deamido-NAD(+) site is built by Lys-173 and Asp-180. The ATP site is built by Lys-189 and Thr-211. 260-261 lines the deamido-NAD(+) pocket; sequence HK.

It belongs to the NAD synthetase family. As to quaternary structure, homodimer.

It catalyses the reaction deamido-NAD(+) + NH4(+) + ATP = AMP + diphosphate + NAD(+) + H(+). Its pathway is cofactor biosynthesis; NAD(+) biosynthesis; NAD(+) from deamido-NAD(+) (ammonia route): step 1/1. Its function is as follows. Catalyzes the ATP-dependent amidation of deamido-NAD to form NAD. Uses ammonia as a nitrogen source. The chain is NH(3)-dependent NAD(+) synthetase from Shigella flexneri serotype 5b (strain 8401).